We begin with the raw amino-acid sequence, 291 residues long: Small ribosomal subunit biogenesis GTPase RsgA (291 aa).

The region spanning Asn63–Leu221 is the CP-type G domain. Residues Thr112–Asp115 and Gly164–Thr172 each bind GTP. 4 residues coordinate Zn(2+): Cys245, Cys250, His252, and Cys258.

This sequence belongs to the TRAFAC class YlqF/YawG GTPase family. RsgA subfamily. Monomer. Associates with 30S ribosomal subunit, binds 16S rRNA. The cofactor is Zn(2+).

It localises to the cytoplasm. In terms of biological role, one of several proteins that assist in the late maturation steps of the functional core of the 30S ribosomal subunit. Helps release RbfA from mature subunits. May play a role in the assembly of ribosomal proteins into the subunit. Circularly permuted GTPase that catalyzes slow GTP hydrolysis, GTPase activity is stimulated by the 30S ribosomal subunit. The protein is Small ribosomal subunit biogenesis GTPase RsgA of Staphylococcus epidermidis (strain ATCC 12228 / FDA PCI 1200).